The chain runs to 218 residues: Large ribosomal subunit protein uL3 (218 aa).

Residues 134 to 154 are disordered; the sequence is GRASHGNSRSHNVPGSIGMAQ. At Q154 the chain carries N5-methylglutamine.

It belongs to the universal ribosomal protein uL3 family. In terms of assembly, part of the 50S ribosomal subunit. Forms a cluster with proteins L14 and L19. Post-translationally, methylated by PrmB.

Its function is as follows. One of the primary rRNA binding proteins, it binds directly near the 3'-end of the 23S rRNA, where it nucleates assembly of the 50S subunit. This chain is Large ribosomal subunit protein uL3, found in Polynucleobacter necessarius subsp. necessarius (strain STIR1).